A 300-amino-acid polypeptide reads, in one-letter code: Acetylglutamate kinase (300 aa).

Substrate-binding positions include 73–74, R95, and N197; that span reads GG.

It belongs to the acetylglutamate kinase family. ArgB subfamily.

Its subcellular location is the cytoplasm. The catalysed reaction is N-acetyl-L-glutamate + ATP = N-acetyl-L-glutamyl 5-phosphate + ADP. It participates in amino-acid biosynthesis; L-arginine biosynthesis; N(2)-acetyl-L-ornithine from L-glutamate: step 2/4. Functionally, catalyzes the ATP-dependent phosphorylation of N-acetyl-L-glutamate. The polypeptide is Acetylglutamate kinase (Bordetella petrii (strain ATCC BAA-461 / DSM 12804 / CCUG 43448)).